The primary structure comprises 219 residues: NAD(P)H-quinone oxidoreductase subunit I (219 aa).

2 4Fe-4S ferredoxin-type domains span residues 55 to 84 (GRIHYEFDKCIACEVCVRVCPINLPVVDWV) and 95 to 124 (RNYSIDFGVCIFCGNCVEYCPTNCLSMTEE). [4Fe-4S] cluster is bound by residues cysteine 64, cysteine 67, cysteine 70, cysteine 74, cysteine 104, cysteine 107, cysteine 110, and cysteine 114.

It belongs to the complex I 23 kDa subunit family. NDH-1 is composed of at least 11 different subunits. [4Fe-4S] cluster is required as a cofactor.

The protein localises to the cellular thylakoid membrane. The enzyme catalyses a plastoquinone + NADH + (n+1) H(+)(in) = a plastoquinol + NAD(+) + n H(+)(out). It carries out the reaction a plastoquinone + NADPH + (n+1) H(+)(in) = a plastoquinol + NADP(+) + n H(+)(out). Its function is as follows. NDH-1 shuttles electrons from an unknown electron donor, via FMN and iron-sulfur (Fe-S) centers, to quinones in the respiratory and/or the photosynthetic chain. The immediate electron acceptor for the enzyme in this species is believed to be plastoquinone. Couples the redox reaction to proton translocation, and thus conserves the redox energy in a proton gradient. In Prochlorococcus marinus (strain SARG / CCMP1375 / SS120), this protein is NAD(P)H-quinone oxidoreductase subunit I.